Here is a 142-residue protein sequence, read N- to C-terminus: Large ribosomal subunit protein uL13 (142 aa).

This sequence belongs to the universal ribosomal protein uL13 family. In terms of assembly, part of the 50S ribosomal subunit.

This protein is one of the early assembly proteins of the 50S ribosomal subunit, although it is not seen to bind rRNA by itself. It is important during the early stages of 50S assembly. This chain is Large ribosomal subunit protein uL13, found in Shigella boydii serotype 18 (strain CDC 3083-94 / BS512).